Reading from the N-terminus, the 66-residue chain is Large ribosomal subunit protein bL35 (66 aa).

This sequence belongs to the bacterial ribosomal protein bL35 family.

The chain is Large ribosomal subunit protein bL35 from Deinococcus deserti (strain DSM 17065 / CIP 109153 / LMG 22923 / VCD115).